The following is a 107-amino-acid chain: U1-lycotoxin-Ls1f (107 aa).

The first 20 residues, 1 to 20 (MMKVLVVVALLVTLISYSSS), serve as a signal peptide directing secretion. Positions 21–41 (EGIDDLEADELLSLMANEQTR) are excised as a propeptide. 4 cysteine pairs are disulfide-bonded: Cys44-Cys59, Cys51-Cys68, Cys58-Cys86, and Cys70-Cys84.

The protein belongs to the neurotoxin 19 (CSTX) family. 04 (U1-Lctx) subfamily. Expressed by the venom gland.

It localises to the secreted. This chain is U1-lycotoxin-Ls1f, found in Lycosa singoriensis (Wolf spider).